The primary structure comprises 496 residues: MPTESGSCSTARQAKQKRKSHSLSIRRTNSSEQERTGLPREMLEGQDSKLPSSVRSTLLELFGQIEREFENLYIENLELRREIDTLNERLAGEGQAIDGAELSKGQLKTKASHSTSQLSQKLKTTYKASTSKIVSSFKTTTSRAICQLVKEYIGHRDGIWDVSVTRTQPIVLGTASADHTALLWSIETGKCLVKYAGHVGSVNSIKFHPSEQLALTASGDQTAHIWRYVVQLPTPQPVADTSQQISGEDEIECSDKDEPDIDGDVSSDCPTVRVPLTSLKSHQGVVIAADWLVGGKQVVTASWDRTANLYDVETSELVHSLTGHDQELTHCCTHPTQRLVVTSSRDTTFRLWDFRDPSIHSVNVFQGHTDTVTSAVFTVGDNVVSGSDDRTVKVWDLKNMRSPIATIRTDSAINRINVCVGQKIIALPHDNRQVRLFDMSGVRLARLPRSSRQGHRRMVCCSAWSEDHPICNLFTCGFDRQAIGWNINIPALLQEK.

2 stretches are compositionally biased toward polar residues: residues 1–13 and 22–31; these read MPTE…TARQ and SLSIRRTNSS. Positions 1 to 50 are disordered; sequence MPTESGSCSTARQAKQKRKSHSLSIRRTNSSEQERTGLPREMLEGQDSKL. Positions 32 to 47 are enriched in basic and acidic residues; the sequence is EQERTGLPREMLEGQD. WD repeat units lie at residues 154–194 and 197–236; these read GHRD…CLVK and GHVG…PTPQ. Positions 238 to 267 are disordered; sequence VADTSQQISGEDEIECSDKDEPDIDGDVSS. Acidic residues predominate over residues 247–265; that stretch reads GEDEIECSDKDEPDIDGDV. WD repeat units follow at residues 281–320, 323–362, 367–405, 408–447, and 454–495; these read SHQG…LVHS, GHDQ…IHSV, GHTD…SPIA, RTDS…LARL, and GHRR…LLQE.

As to quaternary structure, forms homodimers. Interacts with PACS1. Interacts with PACS2.

Its subcellular location is the cytoplasm. The protein resides in the nucleus. Required for normal ER Ca2+ handling in lymphocytes. Together with PACS1, it plays an essential role in stabilizing peripheral lymphocyte populations. The sequence is that of WD repeat-containing protein 37 (Wdr37) from Mus musculus (Mouse).